The chain runs to 205 residues: LexA repressor (205 aa).

The segment at residues 28-48 (RAEIAHKLGFRSANSAEEHLK) is a DNA-binding region (H-T-H motif). Catalysis depends on for autocatalytic cleavage activity residues serine 122 and lysine 159.

This sequence belongs to the peptidase S24 family. As to quaternary structure, homodimer.

The catalysed reaction is Hydrolysis of Ala-|-Gly bond in repressor LexA.. Functionally, represses a number of genes involved in the response to DNA damage (SOS response), including recA and lexA. In the presence of single-stranded DNA, RecA interacts with LexA causing an autocatalytic cleavage which disrupts the DNA-binding part of LexA, leading to derepression of the SOS regulon and eventually DNA repair. This is LexA repressor from Idiomarina loihiensis (strain ATCC BAA-735 / DSM 15497 / L2-TR).